We begin with the raw amino-acid sequence, 901 residues long: HTH-type transcriptional regulator MalT (901 aa).

39–46 (SPAGYGKT) contributes to the ATP binding site. The 66-residue stretch at 829–894 (ELIRTSPLTQ…AAVQHAQKLL (66 aa)) folds into the HTH luxR-type domain. The H-T-H motif DNA-binding region spans 853–872 (NEQIAGELEVAATTIKTHIR).

This sequence belongs to the MalT family. In terms of assembly, monomer in solution. Oligomerizes to an active state in the presence of the positive effectors ATP and maltotriose.

Its activity is regulated as follows. Activated by ATP and maltotriose, which are both required for DNA binding. Positively regulates the transcription of the maltose regulon whose gene products are responsible for uptake and catabolism of malto-oligosaccharides. Specifically binds to the promoter region of its target genes, recognizing a short DNA motif called the MalT box. The sequence is that of HTH-type transcriptional regulator MalT from Escherichia coli O127:H6 (strain E2348/69 / EPEC).